Consider the following 563-residue polypeptide: Serine palmitoyltransferase 3 (563 aa).

Positions 1-29 (MANLNDSAVTNGTLHNPKTQQGKRQSTGC) are enriched in polar residues. Positions 1-32 (MANLNDSAVTNGTLHNPKTQQGKRQSTGCVKN) are disordered. A helical transmembrane segment spans residues 59 to 79 (PLYVYVLTYMGYGIGILFGYL). An N6-(pyridoxal phosphate)lysine modification is found at Lys371.

Belongs to the class-II pyridoxal-phosphate-dependent aminotransferase family. Component of the serine palmitoyltransferase (SPT) complex, which is composed of SPTLC1, SPTLC2 or SPTLC3 and SPTSSA or SPTSSB. The heterodimer consisting of SPTLC1 and SPTLC2/SPTLC3 forms the catalytic core of the enzyme, while SPTSSA or SPTSSB subunits determine substrate specificity. SPT also interacts with ORMDL proteins, especially ORMDL3, which negatively regulate SPT activity in the presence of ceramides. The cofactor is pyridoxal 5'-phosphate. Expressed in white and brown adipose tissues.

The protein resides in the endoplasmic reticulum membrane. It carries out the reaction L-serine + hexadecanoyl-CoA + H(+) = 3-oxosphinganine + CO2 + CoA. The catalysed reaction is dodecanoyl-CoA + L-serine + H(+) = 3-oxotetradecasphinganine + CO2 + CoA. It catalyses the reaction tetradecanoyl-CoA + L-serine + H(+) = 3-oxohexadecasphinganine + CO2 + CoA. The enzyme catalyses octadecanoyl-CoA + L-serine + H(+) = 3-oxoeicosasphinganine + CO2 + CoA. It participates in lipid metabolism; sphingolipid metabolism. Its activity is regulated as follows. SPT complex catalytic activity is negatively regulated by ORMDL proteins, including ORMDL3, in the presence of ceramides. This mechanism allows to maintain ceramide levels at sufficient concentrations for the production of complex sphingolipids, but which prevents the accumulation of ceramides to levels that trigger apoptosis. Component of the serine palmitoyltransferase multisubunit enzyme (SPT) that catalyzes the initial and rate-limiting step in sphingolipid biosynthesis by condensing L-serine and activated acyl-CoA (most commonly palmitoyl-CoA) to form long-chain bases. The SPT complex is composed of SPTLC1, SPTLC2 or SPTLC3 and SPTSSA or SPTSSB. Within this complex, the heterodimer consisting of SPTLC1 and SPTLC2/SPTLC3 forms the catalytic core. The composition of the serine palmitoyltransferase (SPT) complex determines the substrate preference. The SPTLC1-SPTLC2-SPTSSA complex shows a strong preference for C16-CoA substrate, while the SPTLC1-SPTLC3-SPTSSA isozyme uses both C14-CoA and C16-CoA as substrates, with a slight preference for C14-CoA. The SPTLC1-SPTLC2-SPTSSB complex shows a strong preference for C18-CoA substrate, while the SPTLC1-SPTLC3-SPTSSB isozyme displays an ability to use a broader range of acyl-CoAs, without apparent preference. The polypeptide is Serine palmitoyltransferase 3 (Mus musculus (Mouse)).